Consider the following 548-residue polypeptide: Chaperonin GroEL (548 aa).

Residues 30 to 33, Lys51, 87 to 91, Gly415, 479 to 481, and Asp495 each bind ATP; these read TLGP, DGTTT, and NAA. Residues 524-548 form a disordered region; the sequence is LPKEDKSSDSSSSPAGGMGGMGGMM. Positions 539–548 are enriched in gly residues; it reads GGMGGMGGMM.

The protein belongs to the chaperonin (HSP60) family. As to quaternary structure, forms a cylinder of 14 subunits composed of two heptameric rings stacked back-to-back. Interacts with the co-chaperonin GroES.

It is found in the cytoplasm. It catalyses the reaction ATP + H2O + a folded polypeptide = ADP + phosphate + an unfolded polypeptide.. Functionally, together with its co-chaperonin GroES, plays an essential role in assisting protein folding. The GroEL-GroES system forms a nano-cage that allows encapsulation of the non-native substrate proteins and provides a physical environment optimized to promote and accelerate protein folding. The chain is Chaperonin GroEL from Buchnera aphidicola subsp. Acyrthosiphon pisum (strain 5A).